Consider the following 337-residue polypeptide: Casein kinase I isoform alpha-like (337 aa).

Position 8 is an N6-acetyllysine (K8). The Protein kinase domain maps to 17 to 285 (YKLVRKIGSG…YLRQLFRILF (269 aa)). ATP is bound by residues 23 to 31 (IGSGSFGDV) and K46. D136 serves as the catalytic Proton acceptor. A compositionally biased stretch (low complexity) spans 309 to 325 (AASSSGQGQQAQTQTGK). The disordered stretch occupies residues 309-337 (AASSSGQGQQAQTQTGKQTEKNKNNVKDN). Over residues 326–337 (QTEKNKNNVKDN) the composition is skewed to basic and acidic residues.

It belongs to the protein kinase superfamily. CK1 Ser/Thr protein kinase family. Casein kinase I subfamily. Interacts with FAM83A, FAM83B, FAM83C, FAM83D, FAM83E, FAM83F, FAM83G and FAM83H (via DUF1669).

It localises to the cytoplasm. The catalysed reaction is L-seryl-[protein] + ATP = O-phospho-L-seryl-[protein] + ADP + H(+). It carries out the reaction L-threonyl-[protein] + ATP = O-phospho-L-threonyl-[protein] + ADP + H(+). Its function is as follows. Casein kinases are operationally defined by their preferential utilization of acidic proteins such as caseins as substrates. It can phosphorylate a large number of proteins. Participates in Wnt signaling. The sequence is that of Casein kinase I isoform alpha-like (CSNK1A1L) from Homo sapiens (Human).